The chain runs to 32 residues: Toxic phospholipase A2 (32 aa).

It belongs to the phospholipase A2 family. Group III subfamily. Requires Ca(2+) as cofactor.

The protein resides in the secreted. Its subcellular location is the nematocyst. The catalysed reaction is a 1,2-diacyl-sn-glycero-3-phosphocholine + H2O = a 1-acyl-sn-glycero-3-phosphocholine + a fatty acid + H(+). In terms of biological role, PLA2 catalyzes the calcium-dependent hydrolysis of the 2-acyl groups in 3-sn-phosphoglycerides. This Rhopilema nomadica (Mediteranean medusa) protein is Toxic phospholipase A2.